We begin with the raw amino-acid sequence, 214 residues long: Ribonuclease P protein component 3 (214 aa).

This sequence belongs to the eukaryotic/archaeal RNase P protein component 3 family. In terms of assembly, consists of a catalytic RNA component and at least 4-5 protein subunits. Forms a subcomplex with Rnp2 which stimulates the catalytic RNA.

Its subcellular location is the cytoplasm. It carries out the reaction Endonucleolytic cleavage of RNA, removing 5'-extranucleotides from tRNA precursor.. In terms of biological role, part of ribonuclease P, a protein complex that generates mature tRNA molecules by cleaving their 5'-ends. The RNA is catalytic, but its KM for pre-tRNA is 170-fold decreased in the presence of the 4 known protein subunits (Rnp1-4). The protein subunits also decrease the amount of Mg(2+) needed for activity. This Pyrococcus furiosus (strain ATCC 43587 / DSM 3638 / JCM 8422 / Vc1) protein is Ribonuclease P protein component 3.